A 515-amino-acid polypeptide reads, in one-letter code: ATP synthase subunit alpha (515 aa).

171 to 178 (GDRQTGKT) serves as a coordination point for ATP.

Belongs to the ATPase alpha/beta chains family. As to quaternary structure, F-type ATPases have 2 components, CF(1) - the catalytic core - and CF(0) - the membrane proton channel. CF(1) has five subunits: alpha(3), beta(3), gamma(1), delta(1), epsilon(1). CF(0) has three main subunits: a(1), b(2) and c(9-12). The alpha and beta chains form an alternating ring which encloses part of the gamma chain. CF(1) is attached to CF(0) by a central stalk formed by the gamma and epsilon chains, while a peripheral stalk is formed by the delta and b chains.

The protein localises to the cell inner membrane. It catalyses the reaction ATP + H2O + 4 H(+)(in) = ADP + phosphate + 5 H(+)(out). Produces ATP from ADP in the presence of a proton gradient across the membrane. The alpha chain is a regulatory subunit. This chain is ATP synthase subunit alpha, found in Xylella fastidiosa (strain M12).